Here is a 495-residue protein sequence, read N- to C-terminus: Aspartyl/glutamyl-tRNA(Asn/Gln) amidotransferase subunit B (495 aa).

This sequence belongs to the GatB/GatE family. GatB subfamily. As to quaternary structure, heterotrimer of A, B and C subunits.

The enzyme catalyses L-glutamyl-tRNA(Gln) + L-glutamine + ATP + H2O = L-glutaminyl-tRNA(Gln) + L-glutamate + ADP + phosphate + H(+). It catalyses the reaction L-aspartyl-tRNA(Asn) + L-glutamine + ATP + H2O = L-asparaginyl-tRNA(Asn) + L-glutamate + ADP + phosphate + 2 H(+). Functionally, allows the formation of correctly charged Asn-tRNA(Asn) or Gln-tRNA(Gln) through the transamidation of misacylated Asp-tRNA(Asn) or Glu-tRNA(Gln) in organisms which lack either or both of asparaginyl-tRNA or glutaminyl-tRNA synthetases. The reaction takes place in the presence of glutamine and ATP through an activated phospho-Asp-tRNA(Asn) or phospho-Glu-tRNA(Gln). This is Aspartyl/glutamyl-tRNA(Asn/Gln) amidotransferase subunit B from Halobacterium salinarum (strain ATCC 700922 / JCM 11081 / NRC-1) (Halobacterium halobium).